The following is a 170-amino-acid chain: Putative 5'(3')-deoxyribonucleotidase (170 aa).

D28 (nucleophile) is an active-site residue. Mg(2+) contacts are provided by D28, D30, and D134. The active-site Proton donor is D30.

The protein belongs to the 5'(3')-deoxyribonucleotidase family. Mg(2+) serves as cofactor.

Functionally, dephosphorylates the 5' and 2'(3')-phosphates of deoxyribonucleotides. The sequence is that of Putative 5'(3')-deoxyribonucleotidase from Vibrio parahaemolyticus (KVP40).